A 227-amino-acid chain; its full sequence is Nudix hydrolase 27, chloroplastic (227 aa).

The transit peptide at 1 to 44 (MAVKASGFIGKSAISVHLDFSSFPVKFSCLKQFSVSSPKPLVVL) directs the protein to the chloroplast. Residues 61–208 (GYRKNVGICL…KRPVYEHVIK (148 aa)) enclose the Nudix hydrolase domain. The short motif at 94–115 (GGADEGEDLRNAAFRELREETG) is the Nudix box element. The Mn(2+) site is built by glutamate 109 and glutamate 113.

It belongs to the Nudix hydrolase family. Mg(2+) serves as cofactor. Mn(2+) is required as a cofactor. As to expression, expressed in roots, leaves, stems and inflorescences.

Its subcellular location is the plastid. It is found in the chloroplast. Mediates the hydrolysis of some nucleoside diphosphate derivatives. Can use diadenosine 5',5'''-P(1)P(5) pentaphosphate (Ap(5)A) as substrates. The polypeptide is Nudix hydrolase 27, chloroplastic (NUDT27) (Arabidopsis thaliana (Mouse-ear cress)).